A 287-amino-acid polypeptide reads, in one-letter code: O-ureido-serine racemase (287 aa).

Asparagine 20 contacts substrate. Catalysis depends on cysteine 81, which acts as the Proton donor. Substrate is bound by residues 82-83 (GN), asparagine 167, asparagine 200, and 218-219 (EY). Cysteine 227 acts as the Proton acceptor in catalysis. 228-229 (GS) is a substrate binding site.

Belongs to the diaminopimelate epimerase family. As to quaternary structure, monomer.

It is found in the cytoplasm. The catalysed reaction is O-ureido-L-serine = O-ureido-D-serine. With respect to regulation, inhibited by thiol-inactivating reagents such as iodoacetamide and Hg(2+) ions. In terms of biological role, involved in the biosynthesis of the antibiotic D-cycloserine (DCS), a cyclic structural analog of D-alanine, used as an antitubercular agent. Catalyzes the stereoinversion of O-ureido-L-serine to O-ureido-D-serine. This Streptomyces lavendulae protein is O-ureido-serine racemase.